The chain runs to 161 residues: ATP synthase subunit b (161 aa).

A helical membrane pass occupies residues 10–29; the sequence is AVVQLLNFLFLLWILNKLLY.

Belongs to the ATPase B chain family. In terms of assembly, F-type ATPases have 2 components, F(1) - the catalytic core - and F(0) - the membrane proton channel. F(1) has five subunits: alpha(3), beta(3), gamma(1), delta(1), epsilon(1). F(0) has three main subunits: a(1), b(2) and c(10-14). The alpha and beta chains form an alternating ring which encloses part of the gamma chain. F(1) is attached to F(0) by a central stalk formed by the gamma and epsilon chains, while a peripheral stalk is formed by the delta and b chains.

It is found in the cell inner membrane. F(1)F(0) ATP synthase produces ATP from ADP in the presence of a proton or sodium gradient. F-type ATPases consist of two structural domains, F(1) containing the extramembraneous catalytic core and F(0) containing the membrane proton channel, linked together by a central stalk and a peripheral stalk. During catalysis, ATP synthesis in the catalytic domain of F(1) is coupled via a rotary mechanism of the central stalk subunits to proton translocation. Functionally, component of the F(0) channel, it forms part of the peripheral stalk, linking F(1) to F(0). This Fervidobacterium nodosum (strain ATCC 35602 / DSM 5306 / Rt17-B1) protein is ATP synthase subunit b.